The chain runs to 274 residues: Ribosomal RNA small subunit methyltransferase A (274 aa).

S-adenosyl-L-methionine is bound by residues His-15, Leu-17, Gly-42, Glu-64, Asp-89, and Asn-108.

This sequence belongs to the class I-like SAM-binding methyltransferase superfamily. rRNA adenine N(6)-methyltransferase family. RsmA subfamily.

It is found in the cytoplasm. It carries out the reaction adenosine(1518)/adenosine(1519) in 16S rRNA + 4 S-adenosyl-L-methionine = N(6)-dimethyladenosine(1518)/N(6)-dimethyladenosine(1519) in 16S rRNA + 4 S-adenosyl-L-homocysteine + 4 H(+). Its function is as follows. Specifically dimethylates two adjacent adenosines (A1518 and A1519) in the loop of a conserved hairpin near the 3'-end of 16S rRNA in the 30S particle. May play a critical role in biogenesis of 30S subunits. The polypeptide is Ribosomal RNA small subunit methyltransferase A (Prochlorococcus marinus (strain AS9601)).